Here is a 195-residue protein sequence, read N- to C-terminus: tRNA (pseudouridine(54)-N(1))-methyltransferase (195 aa).

Leu-129 contacts S-adenosyl-L-methionine.

This sequence belongs to the methyltransferase superfamily. TrmY family. As to quaternary structure, homodimer.

It localises to the cytoplasm. The enzyme catalyses pseudouridine(54) in tRNA + S-adenosyl-L-methionine = N(1)-methylpseudouridine(54) in tRNA + S-adenosyl-L-homocysteine + H(+). In terms of biological role, specifically catalyzes the N1-methylation of pseudouridine at position 54 (Psi54) in tRNAs. This Methanocorpusculum labreanum (strain ATCC 43576 / DSM 4855 / Z) protein is tRNA (pseudouridine(54)-N(1))-methyltransferase.